The primary structure comprises 295 residues: Lipase 2 (295 aa).

Positions 1–31 are cleaved as a signal peptide; it reads MPKPALRRVMTATVAAVGTLALGLTDATAHA. S48 serves as the catalytic Nucleophile. 3 disulfides stabilise this stretch: C65-C89, C138-C152, and C205-C254. Residue H275 is part of the active site.

This sequence belongs to the 'GDSL' lipolytic enzyme family. In terms of assembly, monomer.

The protein resides in the secreted. The enzyme catalyses a triacylglycerol + H2O = a diacylglycerol + a fatty acid + H(+). Strongly inhibited by Ag(+). The cations Ca(2+) and Mg(2+) do not significantly reduce the lipolytic activity of SCO7513, whereas high concentrations of Co(2+) and Cu(2+) partially inhibit it. Is not inhibited by DTT in vitro. Is resistant to PMSF inhibition, except in the presence of Ca(2+). Its function is as follows. Catalyzes the hydrolysis of fatty acid esters with a preference for long chain fatty acids (C16-C18). This is Lipase 2 from Streptomyces coelicolor (strain ATCC BAA-471 / A3(2) / M145).